The sequence spans 331 residues: Adenosine deaminase (331 aa).

Zn(2+)-binding residues include histidine 12 and histidine 14. 3 residues coordinate substrate: histidine 14, aspartate 16, and glycine 170. Histidine 197 is a Zn(2+) binding site. Glutamate 200 acts as the Proton donor in catalysis. Aspartate 278 is a Zn(2+) binding site. Aspartate 279 contacts substrate.

Belongs to the metallo-dependent hydrolases superfamily. Adenosine and AMP deaminases family. Adenosine deaminase subfamily. Zn(2+) is required as a cofactor.

It carries out the reaction adenosine + H2O + H(+) = inosine + NH4(+). The catalysed reaction is 2'-deoxyadenosine + H2O + H(+) = 2'-deoxyinosine + NH4(+). Catalyzes the hydrolytic deamination of adenosine and 2-deoxyadenosine. The chain is Adenosine deaminase from Shewanella baltica (strain OS223).